Here is a 394-residue protein sequence, read N- to C-terminus: Dimethyladenosine transferase 2, mitochondrial (394 aa).

The N-terminal 19 residues, 1 to 19 (MWVPGAGIPSRLTLSAFTR), are a transit peptide targeting the mitochondrion. S-adenosyl-L-methionine-binding residues include Val75, Glu123, and Asp149. The DNA-binding stretch occupies residues 326–327 (KR).

Belongs to the class I-like SAM-binding methyltransferase superfamily. rRNA adenine N(6)-methyltransferase family. KsgA subfamily. In terms of assembly, homodimer. Component of the mitochondrial transcription initiation complex, composed at least of TFB2M, TFAM and POLRMT. In this complex TFAM recruits POLRMT to the promoter whereas TFB2M induces structural changes in POLRMT to enable promoter opening and trapping of the DNA non-template strand. Interacts with mitochondrial RNA polymerase POLRMT. Interacts with TFAM.

It is found in the mitochondrion. The catalysed reaction is adenosine in rRNA + S-adenosyl-L-methionine = N(6)-methyladenosine in rRNA + S-adenosyl-L-homocysteine + H(+). In terms of biological role, S-adenosyl-L-methionine-dependent rRNA methyltransferase which may methylate two specific adjacent adenosines in the loop of a conserved hairpin near the 3'-end of 12S mitochondrial rRNA. Component of the mitochondrial transcription initiation complex, composed at least of TFB2M, TFAM and POLRMT that is required for basal transcription of mitochondrial DNA. In this complex TFAM recruits POLRMT to a specific promoter whereas TFB2M induces structural changes in POLRMT to enable promoter opening and trapping of the DNA non-template strand. Stimulates transcription independently of the methyltransferase activity. This is Dimethyladenosine transferase 2, mitochondrial from Bos taurus (Bovine).